A 147-amino-acid chain; its full sequence is Transcriptional repressor NrdR (147 aa).

A zinc finger spans residues 3-34; the sequence is CLFCRSDDTKVIDSRTSEDGISIRRRRECQLC. The ATP-cone domain occupies 46 to 136; the sequence is LTVIKRNGTS…VYQDFDSLED (91 aa).

Belongs to the NrdR family. Zn(2+) serves as cofactor.

Its function is as follows. Negatively regulates transcription of bacterial ribonucleotide reductase nrd genes and operons by binding to NrdR-boxes. The chain is Transcriptional repressor NrdR from Tropheryma whipplei (strain TW08/27) (Whipple's bacillus).